Consider the following 491-residue polypeptide: Spermatogenesis-defective protein 39 homolog (491 aa).

Threonine 21 is modified (phosphothreonine). Over residues lysine 72–threonine 81 the composition is skewed to polar residues. Positions lysine 72–proline 101 are disordered. Position 115 is a phosphothreonine (threonine 115). 3 positions are modified to phosphoserine: serine 119, serine 122, and serine 128. The tract at residues glutamine 121–arginine 141 is disordered. Phosphothreonine is present on threonine 130.

Belongs to the SPE39 family. Interacts with VPS33B. Associates with the homotypic fusion and vacuole protein sorting (HOPS) complex; impaired by VPS33B. Interacts with RAB11A.

The protein localises to the cytoplasm. The protein resides in the cytoplasmic vesicle. Its subcellular location is the early endosome. It is found in the recycling endosome. It localises to the late endosome. Its function is as follows. Proposed to be involved in endosomal maturation implicating in part VPS33B. In epithelial cells, the VPS33B:VIPAS39 complex may play a role in the apical RAB11A-dependent recycling pathway and in the maintenance of the apical-basolateral polarity. May play a role in lysosomal trafficking, probably via association with the core HOPS complex in a discrete population of endosomes; the functions seems to be independent of VPS33B. May play a role in vesicular trafficking during spermatogenesis. May be involved in direct or indirect transcriptional regulation of E-cadherin. This is Spermatogenesis-defective protein 39 homolog (Vipas39) from Mus musculus (Mouse).